Here is a 41-residue protein sequence, read N- to C-terminus: Histone H3.2 (41 aa).

Positions 1–41 (MARTKQTARKSTGAKAPRKQLASKAARKSAPATGGIKKPHR) are disordered.

This sequence belongs to the histone H3 family. In terms of assembly, the nucleosome is a histone octamer containing two molecules each of H2A, H2B, H3 and H4 assembled in one H3-H4 heterotetramer and two H2A-H2B heterodimers. The octamer wraps approximately 147 bp of DNA.

It localises to the nucleus. The protein resides in the chromosome. Functionally, core component of nucleosome. Nucleosomes wrap and compact DNA into chromatin, limiting DNA accessibility to the cellular machineries which require DNA as a template. Histones thereby play a central role in transcription regulation, DNA repair, DNA replication and chromosomal stability. DNA accessibility is regulated via a complex set of post-translational modifications of histones, also called histone code, and nucleosome remodeling. The chain is Histone H3.2 from Tetrahymena australis.